Here is a 252-residue protein sequence, read N- to C-terminus: MSWNLFKGGPKKQIVPKTVERDFEREYGKLQQLEDQIKKLQKDMKKSIEADLAMSKSAVRISSDLLGNPLCEPDVDFLQMVTALDTAMKRMDAFNQEKVNQIQKTVMDPLKRYSSVFPSLNMAVKRREQALQDYKRLQTKVEKYEEKDKTGAMIAKLHQAREELRPVRDDFEAKNHQLLDEMPKFYNSRTDFFKPSFQSLIRAQVVYYTEMSRVFGDLAQQVDEVQLSDAEREQENEARLAELRSLSIVADD.

The region spanning 8 to 231 (GGPKKQIVPK…VDEVQLSDAE (224 aa)) is the BAR domain. Coiled-coil stretches lie at residues 17-57 (KTVE…MSKS), 119-150 (SLNMAVKRREQALQDYKRLQTKVEKYEEKDKT), and 224-244 (EVQLSDAEREQENEARLAELR).

The protein localises to the cytoplasm. Its subcellular location is the cytoskeleton. Its function is as follows. Involved in cytokinesis and septation where it has a role in the localization of F-actin. The protein is Bridging integrator 3 homolog (bin3) of Xenopus laevis (African clawed frog).